A 329-amino-acid chain; its full sequence is NADH-quinone oxidoreductase subunit H (329 aa).

The next 9 helical transmembrane spans lie at 9–29 (LIKI…ATYI), 42–62 (GPCY…IKLF), 75–95 (FIFT…MAPI), 117–137 (IGFL…ILAG), 154–174 (IQLL…LMVV), 188–208 (GGFL…FLIA), 238–258 (LKWG…SFVI), 269–291 (WGFI…LSMW), and 309–329 (WKIM…IILI).

Belongs to the complex I subunit 1 family. NDH-1 is composed of 14 different subunits. Subunits NuoA, H, J, K, L, M, N constitute the membrane sector of the complex.

The protein localises to the cell inner membrane. It catalyses the reaction a quinone + NADH + 5 H(+)(in) = a quinol + NAD(+) + 4 H(+)(out). Functionally, NDH-1 shuttles electrons from NADH, via FMN and iron-sulfur (Fe-S) centers, to quinones in the respiratory chain. The immediate electron acceptor for the enzyme in this species is believed to be ubiquinone. Couples the redox reaction to proton translocation (for every two electrons transferred, four hydrogen ions are translocated across the cytoplasmic membrane), and thus conserves the redox energy in a proton gradient. This subunit may bind ubiquinone. This is NADH-quinone oxidoreductase subunit H from Helicobacter pylori (strain P12).